A 100-amino-acid chain; its full sequence is MKRLLVSLRVWMVFLMNWVTPDRKTAAAAVYSAQRTYQRKAAVQAAGLVSFYEWRMAVNEEEKQKAKAAALYKRRCLQAFKESPKQERAGPHLYMAVKRR.

The N-terminal stretch at 1-26 (MKRLLVSLRVWMVFLMNWVTPDRKTA) is a signal peptide.

This is an uncharacterized protein from Bacillus subtilis (strain 168).